Consider the following 95-residue polypeptide: Small ribosomal subunit protein bS18 (95 aa).

This sequence belongs to the bacterial ribosomal protein bS18 family. Part of the 30S ribosomal subunit. Forms a tight heterodimer with protein bS6.

In terms of biological role, binds as a heterodimer with protein bS6 to the central domain of the 16S rRNA, where it helps stabilize the platform of the 30S subunit. The sequence is that of Small ribosomal subunit protein bS18 from Rickettsia rickettsii (strain Sheila Smith).